The primary structure comprises 343 residues: Glyceraldehyde-3-phosphate dehydrogenase (343 aa).

Residues 13–14 (TI) and G111 contribute to the NAD(+) site. 140-142 (SCN) is a binding site for D-glyceraldehyde 3-phosphate. C141 functions as the Nucleophile in the catalytic mechanism. R169 is an NAD(+) binding site. 195-196 (HA) is a binding site for D-glyceraldehyde 3-phosphate. Residue Q302 participates in NAD(+) binding.

It belongs to the glyceraldehyde-3-phosphate dehydrogenase family. Homotetramer.

It localises to the cytoplasm. It catalyses the reaction D-glyceraldehyde 3-phosphate + phosphate + NADP(+) = (2R)-3-phospho-glyceroyl phosphate + NADPH + H(+). It carries out the reaction D-glyceraldehyde 3-phosphate + phosphate + NAD(+) = (2R)-3-phospho-glyceroyl phosphate + NADH + H(+). Its pathway is carbohydrate degradation; glycolysis; pyruvate from D-glyceraldehyde 3-phosphate: step 1/5. The polypeptide is Glyceraldehyde-3-phosphate dehydrogenase (Hyperthermus butylicus (strain DSM 5456 / JCM 9403 / PLM1-5)).